The sequence spans 564 residues: Heat shock factor protein 2 (564 aa).

Residues 21 to 126 (VPAFLSKLWA…LLEHIKRKVS (106 aa)) mediate DNA binding. A hydrophobic repeat HR-A/B region spans residues 133 to 206 (NKISQEDLSK…VTLVQNNQLV (74 aa)). Positions 271-280 (EENTMVDEEN) are enriched in acidic residues. Disordered stretches follow at residues 271–301 (EENT…CSRS) and 320–347 (QGDK…SPLM). The hydrophobic repeat HR-C stretch occupies residues 390–415 (LLDYLDSIDCSLEDFQAMLSGRQFSI). Residues 448 to 465 (TTKSNAGPAASQETQVSK) are compositionally biased toward polar residues. The interval 448 to 468 (TTKSNAGPAASQETQVSKPKS) is disordered.

Belongs to the HSF family. As to quaternary structure, homotrimer. As to expression, expressed in most tissues with the exceptions of blood and liver.

The protein localises to the cytoplasm. The protein resides in the nucleus. In terms of biological role, DNA-binding protein that specifically binds heat shock promoter elements (HSE) and activates transcription. HSF2 shows constitutive DNA binding activity, even without heat shock. This is Heat shock factor protein 2 (HSF2) from Gallus gallus (Chicken).